The sequence spans 287 residues: Protein REVEILLE 3 (287 aa).

The HTH myb-type domain maps to 56 to 110 (TITKSRENWTEQEHDKFLEALHLFDRDWKKIKAFVGSKTVIQIRSHAQKYFLKVQ). The H-T-H motif DNA-binding region spans 83–106 (WKKIKAFVGSKTVIQIRSHAQKYF). The interval 111–135 (KNGTKEHLPPPRPKRKANHPYPQKA) is disordered.

Its subcellular location is the nucleus. Its function is as follows. Probable transcription factor. The protein is Protein REVEILLE 3 (RVE3) of Arabidopsis thaliana (Mouse-ear cress).